Reading from the N-terminus, the 341-residue chain is Inactive caspase-12 (341 aa).

Positions 1–92 (MADEKPSNGV…QLSSDISSDG (92 aa)) constitute a CARD domain. Phosphoserine is present on residues Ser85 and Ser90. Residues His172 and Cys220 contribute to the active site.

The protein belongs to the peptidase C14A family. Widely expressed, with highest levels in lung.

In terms of biological role, may function as a negative regulator of inflammatory responses and innate immunity. May reduce cytokine release in response to bacterial lipopolysaccharide during infection. Reduces activation of NF-kappa-B in response to TNF. May lack protease activity. The protein is Inactive caspase-12 (CASP12) of Homo sapiens (Human).